The sequence spans 104 residues: MNRDEVQLLGFEIVAYAGDARSKLLEALNAAKDSEFDKAEQLVEEANECIANAHKAQTNLLAQEAKGEDIAYSITMIHGQDHLMTTLLLKDLMKHLIELYKKGS.

The 102-residue stretch at M1–K102 folds into the PTS EIIA type-3 domain. The active-site Tele-phosphohistidine intermediate is the H78. H78 bears the Phosphohistidine; by HPr mark. A Mg(2+)-binding site is contributed by D81.

In terms of assembly, homotrimer. Requires Mg(2+) as cofactor.

It localises to the cytoplasm. Functionally, the phosphoenolpyruvate-dependent sugar phosphotransferase system (sugar PTS), a major carbohydrate active transport system, catalyzes the phosphorylation of incoming sugar substrates concomitantly with their translocation across the cell membrane. The enzyme II LacEF PTS system is involved in lactose transport. The polypeptide is PTS system lactose-specific EIIA component (Staphylococcus epidermidis (strain ATCC 35984 / DSM 28319 / BCRC 17069 / CCUG 31568 / BM 3577 / RP62A)).